A 94-amino-acid chain; its full sequence is Pyrimidine/purine nucleoside phosphorylase (94 aa).

The protein belongs to the nucleoside phosphorylase PpnP family.

The catalysed reaction is a purine D-ribonucleoside + phosphate = a purine nucleobase + alpha-D-ribose 1-phosphate. It catalyses the reaction adenosine + phosphate = alpha-D-ribose 1-phosphate + adenine. It carries out the reaction cytidine + phosphate = cytosine + alpha-D-ribose 1-phosphate. The enzyme catalyses guanosine + phosphate = alpha-D-ribose 1-phosphate + guanine. The catalysed reaction is inosine + phosphate = alpha-D-ribose 1-phosphate + hypoxanthine. It catalyses the reaction thymidine + phosphate = 2-deoxy-alpha-D-ribose 1-phosphate + thymine. It carries out the reaction uridine + phosphate = alpha-D-ribose 1-phosphate + uracil. The enzyme catalyses xanthosine + phosphate = alpha-D-ribose 1-phosphate + xanthine. Catalyzes the phosphorolysis of diverse nucleosides, yielding D-ribose 1-phosphate and the respective free bases. Can use uridine, adenosine, guanosine, cytidine, thymidine, inosine and xanthosine as substrates. Also catalyzes the reverse reactions. The polypeptide is Pyrimidine/purine nucleoside phosphorylase (Salmonella arizonae (strain ATCC BAA-731 / CDC346-86 / RSK2980)).